A 203-amino-acid chain; its full sequence is Casparian strip membrane protein 1 (203 aa).

Position 2 is an N-acetylalanine (A2). Over 2–40 the chain is Cytoplasmic; the sequence is AKESTTIDVGEPSTVTKSSSHVVKKKGFVAAAAGGGAKR. The chain crosses the membrane as a helical span at residues 41 to 61; that stretch reads GLAIFDFLLRLAAIGVTIGAA. The Extracellular segment spans residues 62 to 92; sequence SVMYTAQETLPFFTQFLQFQAGYDDLPAFQY. The helical transmembrane segment at 93–113 threads the bilayer; it reads FVIAVAIVASYLVLSLPFSIV. Residues 114–124 lie on the Cytoplasmic side of the membrane; that stretch reads TIVRPLAVAPR. The chain crosses the membrane as a helical span at residues 125–145; the sequence is LILLIFDTLVVTLNTSAAAAA. The Extracellular portion of the chain corresponds to 146–177; that stretch reads ASIVYLAHNGNQSTNWLPICQQFGDFCQNVST. N156 and N174 each carry an N-linked (GlcNAc...) asparagine glycan. A helical transmembrane segment spans residues 178-198; it reads AVVAASIAILFFIVLIIISAI. Topologically, residues 199–203 are cytoplasmic; that stretch reads ALKRH.

Belongs to the Casparian strip membrane proteins (CASP) family. As to quaternary structure, homodimer and heterodimers.

The protein resides in the cell membrane. Its function is as follows. Regulates membrane-cell wall junctions and localized cell wall deposition. Required for establishment of the Casparian strip membrane domain (CSD) and the subsequent formation of Casparian strips, a cell wall modification of the root endodermis that determines an apoplastic barrier between the intraorganismal apoplasm and the extraorganismal apoplasm and prevents lateral diffusion. This Arabidopsis lyrata subsp. lyrata (Lyre-leaved rock-cress) protein is Casparian strip membrane protein 1.